The following is a 1095-amino-acid chain: Solute carrier family 12 member 1 (1095 aa).

Residues 1-173 (MSVSIPSNSV…EEDMTGVVKF (173 aa)) lie on the Cytoplasmic side of the membrane. Residues 16 to 19 (RFQV) carry the RFXV motif motif. The interval 29–49 (AAAVGDSADPPHYEETSFGDE) is disordered. Phosphoserine is present on residues S57 and S87. 4 positions are modified to phosphothreonine: T91, T96, T101, and T114. S116 carries the phosphoserine modification. S126 bears the Phosphoserine; by AMPK mark. The residue at position 144 (S144) is a Phosphoserine. Residues 174-194 (GWVKGVLVRCMLNIWGVMLFI) form a helical membrane-spanning segment. Over 195 to 197 (RLS) the chain is Extracellular. A helical transmembrane segment spans residues 198–218 (WIVGEAGIGLGVLIILLSTMV). The Cytoplasmic portion of the chain corresponds to 219–255 (TSITGLSTSAIATNGFVRGGGAYYLISRSLGPEFGGS). Residues 256-276 (IGLIFAFANAVAVAMYVVGFA) traverse the membrane as a helical segment. The Extracellular portion of the chain corresponds to 277-298 (ETVVDLLKESDSMMVDPTNDIR). Residues 299-319 (IIGSITVVILLGISVAGMEWE) form a helical membrane-spanning segment. Residues 320-323 (AKAQ) are Cytoplasmic-facing. Residues 324-344 (VILLVILLIAIANFFIGTVIP) traverse the membrane as a helical segment. Over 345-375 (SNNEKKSRGFFNYQASIFAENFGPSFTKGEG) the chain is Extracellular. Residues 376–396 (FFSVFAIFFPAATGILAGANI) form a helical membrane-spanning segment. The Cytoplasmic segment spans residues 397-413 (SGDLEDPQDAIPRGTML). Residues 414–434 (AIFITTVAYIGVAICVAACVV) traverse the membrane as a helical segment. At 435–546 (RDATGSMNDT…NNEPLRGYFL (112 aa)) the chain is on the extracellular side. N-linked (GlcNAc...) asparagine glycosylation is found at N442 and N452. A run of 2 helical transmembrane segments spans residues 547–567 (TFVI…APII) and 568–588 (SNFF…ASYA). Over 589–605 (KSPGWRPAYGIYNMWVS) the chain is Extracellular. The chain crosses the membrane as a helical span at residues 606 to 626 (LFGAILCCAVMFVINWWAAVI). The Cytoplasmic portion of the chain corresponds to 627–1095 (TYVIELFLYI…NHKNVLTFYS (469 aa)).

The protein belongs to the SLC12A transporter family. In terms of assembly, when phosphorylated, interacts with PPP3CB. Phosphorylated at Ser-87, Thr-96 and Thr-101 by OXSR1/OSR1 and STK39/SPAK downstream of WNK kinases (WNK1, WNK2, WNK3 or WNK4), promoting its activity. Short-term cyclosporine administration increases SLC12A1 phosphorylation in kidney thick ascending limb, possibly through the inhibition of PPP3CB/calcineurin A beta phosphatase. As to expression, predominantly expressed in kidney (at protein level). Kidney-specific; most highly expressed in the outer stripe of outer medulla (at protein level). In terms of tissue distribution, kidney-specific; most highly expressed in the cortical thick ascending limb (at protein level). As to expression, kidney-specific; most highly expressed in the inner stripe of outer medulla (at protein level).

It localises to the apical cell membrane. It carries out the reaction K(+)(out) + 2 chloride(out) + Na(+)(out) = K(+)(in) + 2 chloride(in) + Na(+)(in). Activated following phosphorylation by OXSR1/OSR1 and STK39/SPAK downstream of WNK kinases (WNK1, WNK2, WNK3 or WNK4). With respect to regulation, inhibited by mercury dichloride and diuretic drug bumetaide. Inactive in isotonic conditions. Its function is as follows. Renal sodium, potassium and chloride ion cotransporter that mediates the transepithelial NaCl reabsorption in the thick ascending limb and plays an essential role in the urinary concentration and volume regulation. Electrically silent transporter system. High affinity, high capacity cotransporter for sodium, potassium and chloride ions, with a coupling ratio 1Na(+):1K(+):2Cl(-). In terms of biological role, high affinity, low capacity cotransporter for sodium, potassium and chloride ions, with a coupling ratio 1Na(+):1K(+):2Cl(-). Functionally, low affinity, low capacity cotransporter for sodium, potassium and chloride ions, with a coupling ratio 1Na(+):1K(+):2Cl(-). This is Solute carrier family 12 member 1 (Slc12a1) from Mus musculus (Mouse).